The following is a 526-amino-acid chain: NAD(P)H-quinone oxidoreductase chain 4 (526 aa).

Helical transmembrane passes span 5–25, 32–52, 87–107, 111–131, 133–153, 165–185, 211–231, 239–259, 273–293, 302–320, 331–351, 371–393, and 414–434; these read FPWL…VPLI, WYSF…FFTS, LILL…PVTL, MFHF…AVQD, VLFF…LAIW, FILY…AMYF, FLGL…HTWL, TAPV…YALI, FAPL…LTSF, IAYS…VGSL, QMIS…ATYD, IFAM…GFVA, and LVVL…LSML.

Belongs to the complex I subunit 4 family.

The protein localises to the cell inner membrane. The enzyme catalyses a plastoquinone + NADH + (n+1) H(+)(in) = a plastoquinol + NAD(+) + n H(+)(out). It carries out the reaction a plastoquinone + NADPH + (n+1) H(+)(in) = a plastoquinol + NADP(+) + n H(+)(out). NDH-1 shuttles electrons from NAD(P)H, via FMN and iron-sulfur (Fe-S) centers, to quinones in the respiratory chain. The immediate electron acceptor for the enzyme in this species is believed to be plastoquinone. Couples the redox reaction to proton translocation (for every two electrons transferred, four hydrogen ions are translocated across the cytoplasmic membrane), and thus conserves the redox energy in a proton gradient. This chain is NAD(P)H-quinone oxidoreductase chain 4, found in Gloeobacter violaceus (strain ATCC 29082 / PCC 7421).